The sequence spans 132 residues: uncharacterized protein (132 aa).

The tract at residues 39-93 (HPAGASEALGALPPPRQLVEKRRVSPPRRLDQSGRDGGAVAKCSLSRGLSPPGWT) is disordered. The segment covering 56–72 (LVEKRRVSPPRRLDQSG) has biased composition (basic and acidic residues).

This is an uncharacterized protein from Homo sapiens (Human).